The primary structure comprises 194 residues: Thymidylate kinase (194 aa).

7–14 provides a ligand contact to ATP; the sequence is GIDTAGKS.

The protein belongs to the thymidylate kinase family.

The enzyme catalyses dTMP + ATP = dTDP + ADP. Its function is as follows. Phosphorylation of dTMP to form dTDP in both de novo and salvage pathways of dTTP synthesis. The polypeptide is Thymidylate kinase (Nautilia profundicola (strain ATCC BAA-1463 / DSM 18972 / AmH)).